Reading from the N-terminus, the 761-residue chain is Polyribonucleotide nucleotidyltransferase (761 aa).

Mg(2+) is bound by residues aspartate 532 and aspartate 538. The region spanning 598–657 is the KH domain; sequence PRVISVQIPVDKIGELIGPKGKTINAIQDETGADISIDEDGTVYIGAVDGPSAEAARAQV. One can recognise an S1 motif domain in the interval 669–741; that stretch reads GEQFLGTVVK…DRGKLSLAPV (73 aa).

This sequence belongs to the polyribonucleotide nucleotidyltransferase family. It depends on Mg(2+) as a cofactor.

It localises to the cytoplasm. The enzyme catalyses RNA(n+1) + phosphate = RNA(n) + a ribonucleoside 5'-diphosphate. In terms of biological role, involved in mRNA degradation. Catalyzes the phosphorolysis of single-stranded polyribonucleotides processively in the 3'- to 5'-direction. In Leifsonia xyli subsp. xyli (strain CTCB07), this protein is Polyribonucleotide nucleotidyltransferase.